Consider the following 344-residue polypeptide: Phosphate acyltransferase (344 aa).

It belongs to the PlsX family. As to quaternary structure, homodimer. Probably interacts with PlsY.

It is found in the cytoplasm. The enzyme catalyses a fatty acyl-[ACP] + phosphate = an acyl phosphate + holo-[ACP]. It functions in the pathway lipid metabolism; phospholipid metabolism. Catalyzes the reversible formation of acyl-phosphate (acyl-PO(4)) from acyl-[acyl-carrier-protein] (acyl-ACP). This enzyme utilizes acyl-ACP as fatty acyl donor, but not acyl-CoA. The protein is Phosphate acyltransferase of Cyanothece sp. (strain PCC 7425 / ATCC 29141).